The following is a 760-amino-acid chain: Golgin subfamily A member 5 (760 aa).

Topologically, residues 1–727 (MSWFVDLAGK…IFLRRYPMAR (727 aa)) are cytoplasmic. Residues 95–111 (VSSTTPLGSSSKASSNF) are compositionally biased toward polar residues. Disordered regions lie at residues 95–114 (VSST…FVRP), 126–216 (DFLN…SQAD), and 432–456 (TEEK…EYTK). Basic and acidic residues predominate over residues 135-146 (QSEKKEVRRETV). Residues 148–166 (KAFSPTGVSAQSQMPTVSL) show a composition bias toward polar residues. Over residues 174–201 (PSVTPTPSSTQGLSRNSSLGSLSSSSHS) the composition is skewed to low complexity. Positions 249–668 (QGQEHVISNL…LQGGQNSASH (420 aa)) form a coiled coil. Polar residues predominate over residues 441–450 (LQQQAKSSRS). Residues 728 to 748 (VFVIIYMALLHLWVMIVLLTY) form a helical; Anchor for type IV membrane protein membrane-spanning segment. Residues 749–760 (TPEMHHSHPDGR) lie on the Extracellular side of the membrane.

It is found in the golgi apparatus membrane. Its function is as follows. Involved in maintaining Golgi structure. Stimulates the formation of Golgi stacks and ribbons. Involved in intra-Golgi retrograde transport. This is Golgin subfamily A member 5 (golga5) from Danio rerio (Zebrafish).